The sequence spans 428 residues: Elongation factor 1-alpha (428 aa).

A tr-type G domain is found at 5 to 225; sequence KPILNVAFIG…DAFQPPEKPT (221 aa). A G1 region spans residues 14–21; that stretch reads GHVDAGKS. Residue 14-21 participates in GTP binding; sequence GHVDAGKS. S21 provides a ligand contact to Mg(2+). Positions 70–74 are G2; the sequence is GVTID. The segment at 91 to 94 is G3; that stretch reads DCPG. GTP-binding positions include 91–95 and 149–152; these read DCPGH and NKMD. The tract at residues 149–152 is G4; it reads NKMD. A G5 region spans residues 189 to 191; the sequence is ASL.

The protein belongs to the TRAFAC class translation factor GTPase superfamily. Classic translation factor GTPase family. EF-Tu/EF-1A subfamily.

It is found in the cytoplasm. It catalyses the reaction GTP + H2O = GDP + phosphate + H(+). In terms of biological role, GTP hydrolase that promotes the GTP-dependent binding of aminoacyl-tRNA to the A-site of ribosomes during protein biosynthesis. The polypeptide is Elongation factor 1-alpha (Methanococcus maripaludis (strain C5 / ATCC BAA-1333)).